A 468-amino-acid chain; its full sequence is Cysteine--tRNA ligase (468 aa).

Cys-36 is a Zn(2+) binding site. The 'HIGH' region motif lies at Pro-38–Asn-48. 3 residues coordinate Zn(2+): Cys-216, His-241, and Glu-245. Positions Lys-274–Ser-278 match the 'KMSKS' region motif. Lys-277 is an ATP binding site.

It belongs to the class-I aminoacyl-tRNA synthetase family. Monomer. It depends on Zn(2+) as a cofactor.

It localises to the cytoplasm. The catalysed reaction is tRNA(Cys) + L-cysteine + ATP = L-cysteinyl-tRNA(Cys) + AMP + diphosphate. This Parvibaculum lavamentivorans (strain DS-1 / DSM 13023 / NCIMB 13966) protein is Cysteine--tRNA ligase.